The chain runs to 334 residues: L-lactate dehydrogenase C chain (334 aa).

NAD(+)-binding positions include G30–K58 and R100. R107, N139, and R170 together coordinate substrate. Residue N139 participates in NAD(+) binding. Catalysis depends on H194, which acts as the Proton acceptor. A substrate-binding site is contributed by T249.

It belongs to the LDH/MDH superfamily. LDH family. Homotetramer. As to expression, eye and liver.

Its subcellular location is the cytoplasm. The enzyme catalyses (S)-lactate + NAD(+) = pyruvate + NADH + H(+). It functions in the pathway fermentation; pyruvate fermentation to lactate; (S)-lactate from pyruvate: step 1/1. This chain is L-lactate dehydrogenase C chain (ldhc), found in Fundulus heteroclitus (Killifish).